The primary structure comprises 162 residues: Protein lon-8 (162 aa).

The first 23 residues, 1–23 (MRNSRFCAILAVISAISVSYVLA), serve as a signal peptide directing secretion.

The protein resides in the secreted. Functionally, secreted protein that is involved in larval elongation, early adult growth and male tail development. This is Protein lon-8 from Caenorhabditis elegans.